The sequence spans 435 residues: Putative acid phosphatase F26C11.1 (435 aa).

Catalysis depends on histidine 38, which acts as the Nucleophile. The Proton donor role is filled by aspartate 317. An intrachain disulfide couples cysteine 382 to cysteine 388.

It belongs to the histidine acid phosphatase family.

It carries out the reaction a phosphate monoester + H2O = an alcohol + phosphate. This chain is Putative acid phosphatase F26C11.1, found in Caenorhabditis elegans.